Reading from the N-terminus, the 878-residue chain is MGPLSRDAWAQRLGAFRASPSAFMAGPEGEDLGRDLLSDLRSEKLSEQTKVSLLALSMEYPAQLWPDASAAEVAATSLLDTLVLLPPRPSALRRPLLLAATTALAAGGALGPTSGASCRLLPLLLGLAAGSDLGRGFVPASEQRPLQATACECLRELESCKPGLLGGSLGLLRGLLGQEGPVQPLSLLLALALRNTLVLQSRVGAGLGGLLTDKVSPTGGGPWDWTLVEEGDGRLQPQAPSWPAAEEGEGERSLTAREHSPEEARELRAAVIQLLDTSYLLTPVAQAQLLWLLGWALRGLQGQPPALFKPQLVRLLGTAQLTLLHAMLALKAAFGEALFTAQDEALLLRRLTLAAQHPALPPPTHLFYLHCVLSFPENWPLGPEGEEAAPLLLGPQLCRGLLPSLLHDPMALLARLHLLCLLCAEEEEEEKGQLPSPRHYLEELLAGLRQRAALDGGPRALATLCFQASYLVACCLAGQPTVLTPLIHGLAQLYQARPMLAPHFVDLLDQVDSELREPLKVVLRQVVVSRPGRDEALCWHLQMLAKVADGDAQSATLNFLQAAAAHCTNWDLQQGLLRVCRALLRAGVRGGLVDLLQVLARQLEDPDGRDHARLYYILLAHLAAPKLGVALGPSLAAPALASSLVAENQGFVAALMVQEAPALVRLSLGSHRVKGPLPVLKLQPEALEPIYSLELRFRVEGQLYAPLEAVHVPCLCPGRPARPLLLPLQPRCPAPARLDVHALYTTSTGLTCHAHLPPLFVNFADLFLPFPQPPEGAGLGFFEELWDSCLPEGAESRVWCPLGPQGLEGLVSRHLEPFVVVAQPPTSYCVAIHLPPDSKLLLRLEAALADGVPVALRTDDWAVLPLAGDYLRGLAAAV.

The disordered stretch occupies residues 234–260; the sequence is RLQPQAPSWPAAEEGEGERSLTAREHS. Basic and acidic residues predominate over residues 250–260; the sequence is GERSLTAREHS.

As to quaternary structure, probably part of the adaptor protein complex 5 (AP-5), a tetramer composed of AP5B1, AP5M1, AP5S1 and AP5Z1. Interacts with ZFYVE26 and SPG11.

As part of AP-5, a probable fifth adaptor protein complex it may be involved in endosomal transport. This is AP-5 complex subunit beta-1 (AP5B1) from Homo sapiens (Human).